A 191-amino-acid polypeptide reads, in one-letter code: Prostaglandin-H2 D-isomerase (191 aa).

A signal peptide spans 1–24 (MAALHTLWMGLVLLGVLGVLQTRA). Gln-25 is subject to Pyrrolidone carboxylic acid. Asn-51 is a glycosylation site (N-linked (GlcNAc...) asparagine). The active-site Nucleophile is the Cys-65. Asn-78 carries an N-linked (GlcNAc...) asparagine glycan. A disulfide bridge links Cys-89 with Cys-186.

The protein belongs to the calycin superfamily. Lipocalin family. Monomer. N- and O-glycosylated. Both N-glycosylation recognition sites are almost quantitatively occupied by N-glycans of the biantennary complex type, with a considerable proportion of structures bearing a bisecting GlcNAc. N-glycan at Asn-78: dHex1Hex5HexNAc4. Agalacto structure as well as sialylated and nonsialylated oligosaccharides bearing alpha2-3- and/or alpha2-6-linked NeuNAc are present.

The protein localises to the rough endoplasmic reticulum. It localises to the nucleus membrane. It is found in the golgi apparatus. The protein resides in the cytoplasm. Its subcellular location is the perinuclear region. The protein localises to the secreted. The enzyme catalyses prostaglandin H2 = prostaglandin D2. Its function is as follows. Catalyzes the conversion of PGH2 to PGD2, a prostaglandin involved in smooth muscle contraction/relaxation and a potent inhibitor of platelet aggregation. Involved in a variety of CNS functions, such as sedation, NREM sleep and PGE2-induced allodynia, and may have an anti-apoptotic role in oligodendrocytes. Binds small non-substrate lipophilic molecules, including biliverdin, bilirubin, retinal, retinoic acid and thyroid hormone, and may act as a scavenger for harmful hydrophobic molecules and as a secretory retinoid and thyroid hormone transporter. Possibly involved in development and maintenance of the blood-brain, blood-retina, blood-aqueous humor and blood-testis barrier. It is likely to play important roles in both maturation and maintenance of the central nervous system and male reproductive system. Involved in PLA2G3-dependent maturation of mast cells. PLA2G3 is secreted by immature mast cells and acts on nearby fibroblasts upstream to PTDGS to synthesize PGD2, which in turn promotes mast cell maturation and degranulation via PTGDR. In Felis catus (Cat), this protein is Prostaglandin-H2 D-isomerase (PTGDS).